The chain runs to 343 residues: Phosphate acyltransferase (343 aa).

This sequence belongs to the PlsX family. As to quaternary structure, homodimer. Probably interacts with PlsY.

It localises to the cytoplasm. The catalysed reaction is a fatty acyl-[ACP] + phosphate = an acyl phosphate + holo-[ACP]. It functions in the pathway lipid metabolism; phospholipid metabolism. Its function is as follows. Catalyzes the reversible formation of acyl-phosphate (acyl-PO(4)) from acyl-[acyl-carrier-protein] (acyl-ACP). This enzyme utilizes acyl-ACP as fatty acyl donor, but not acyl-CoA. The chain is Phosphate acyltransferase from Coxiella burnetii (strain RSA 331 / Henzerling II).